Here is a 651-residue protein sequence, read N- to C-terminus: Probable potassium transport system protein Kup 3 (651 aa).

12 helical membrane passes run 38–58, 77–97, 129–149, 166–186, 197–217, 242–262, 276–296, 314–334, 366–386, 396–416, 421–441, and 448–468; these read FWALTLGGIGVVFGDIGTSPL, VLVLGVLSLILWALLIVVTAK, LFLLVLGVIGASMFIGDSMIT, PALEHYVVPLTVLVLVLLFGV, FFGPVMLVWFATLAAMGAMHI, IGLVTLGAVFLAVTGGEALYA, WLGFVLPALLINYFGQGALVL, LVLPLTLMATAATVIASQAVI, IYLPRVNALLLIGVLLLVLLF, YGIAVSTTMVVDGIMGFVVIW, WSWPAAALVILPLVLVDAMFF, and LLDGAWVPLLFGLAMAVVIWT.

Belongs to the HAK/KUP transporter (TC 2.A.72) family.

The protein localises to the cell inner membrane. The catalysed reaction is K(+)(in) + H(+)(in) = K(+)(out) + H(+)(out). Functionally, transport of potassium into the cell. Likely operates as a K(+):H(+) symporter. This Rhodopseudomonas palustris (strain ATCC BAA-98 / CGA009) protein is Probable potassium transport system protein Kup 3.